Reading from the N-terminus, the 211-residue chain is Thiamine-phosphate synthase (211 aa).

Residues 37–41 (QLRIK) and Asn69 contribute to the 4-amino-2-methyl-5-(diphosphooxymethyl)pyrimidine site. Residues Asp70 and Asp89 each contribute to the Mg(2+) site. Ser108 contributes to the 4-amino-2-methyl-5-(diphosphooxymethyl)pyrimidine binding site. Residue 134 to 136 (TQT) participates in 2-[(2R,5Z)-2-carboxy-4-methylthiazol-5(2H)-ylidene]ethyl phosphate binding. Residue Lys137 coordinates 4-amino-2-methyl-5-(diphosphooxymethyl)pyrimidine. 2-[(2R,5Z)-2-carboxy-4-methylthiazol-5(2H)-ylidene]ethyl phosphate is bound by residues Gly166 and 186-187 (VS).

Belongs to the thiamine-phosphate synthase family. It depends on Mg(2+) as a cofactor.

The catalysed reaction is 2-[(2R,5Z)-2-carboxy-4-methylthiazol-5(2H)-ylidene]ethyl phosphate + 4-amino-2-methyl-5-(diphosphooxymethyl)pyrimidine + 2 H(+) = thiamine phosphate + CO2 + diphosphate. It carries out the reaction 2-(2-carboxy-4-methylthiazol-5-yl)ethyl phosphate + 4-amino-2-methyl-5-(diphosphooxymethyl)pyrimidine + 2 H(+) = thiamine phosphate + CO2 + diphosphate. The enzyme catalyses 4-methyl-5-(2-phosphooxyethyl)-thiazole + 4-amino-2-methyl-5-(diphosphooxymethyl)pyrimidine + H(+) = thiamine phosphate + diphosphate. Its pathway is cofactor biosynthesis; thiamine diphosphate biosynthesis; thiamine phosphate from 4-amino-2-methyl-5-diphosphomethylpyrimidine and 4-methyl-5-(2-phosphoethyl)-thiazole: step 1/1. Its function is as follows. Condenses 4-methyl-5-(beta-hydroxyethyl)thiazole monophosphate (THZ-P) and 2-methyl-4-amino-5-hydroxymethyl pyrimidine pyrophosphate (HMP-PP) to form thiamine monophosphate (TMP). This chain is Thiamine-phosphate synthase, found in Salmonella choleraesuis (strain SC-B67).